Here is a 145-residue protein sequence, read N- to C-terminus: Large ribosomal subunit protein bL9 (145 aa).

It belongs to the bacterial ribosomal protein bL9 family.

Its function is as follows. Binds to the 23S rRNA. The sequence is that of Large ribosomal subunit protein bL9 from Ureaplasma urealyticum serovar 10 (strain ATCC 33699 / Western).